The sequence spans 178 residues: uncharacterized protein (178 aa).

Disordered stretches follow at residues 89-115 and 136-178; these read NEEQ…RLSI and DMPT…EIKA. Positions 98-109 are enriched in low complexity; the sequence is ASHGSTSSATST. Positions 167 to 178 are enriched in acidic residues; the sequence is DSDEEEEEEIKA.

It localises to the cytoplasm. The protein localises to the nucleus. This is an uncharacterized protein from Schizosaccharomyces pombe (strain 972 / ATCC 24843) (Fission yeast).